The chain runs to 170 residues: Macro domain-containing protein VPA0103 (170 aa).

In terms of domain architecture, Macro spans 1-170; the sequence is MNAISLVQGD…SIWQHALTQH (170 aa).

It belongs to the MacroD-type family.

This is Macro domain-containing protein VPA0103 from Vibrio parahaemolyticus serotype O3:K6 (strain RIMD 2210633).